The sequence spans 907 residues: Protein translocase subunit SecA (907 aa).

Residues Gln87, 105-109, and Asp512 contribute to the ATP site; that span reads GEGKT. Positions 891, 893, 902, and 903 each coordinate Zn(2+).

Belongs to the SecA family. As to quaternary structure, monomer and homodimer. Part of the essential Sec protein translocation apparatus which comprises SecA, SecYEG and auxiliary proteins SecDF-YajC and YidC. It depends on Zn(2+) as a cofactor.

It localises to the cell inner membrane. Its subcellular location is the cytoplasm. It carries out the reaction ATP + H2O + cellular proteinSide 1 = ADP + phosphate + cellular proteinSide 2.. Part of the Sec protein translocase complex. Interacts with the SecYEG preprotein conducting channel. Has a central role in coupling the hydrolysis of ATP to the transfer of proteins into and across the cell membrane, serving both as a receptor for the preprotein-SecB complex and as an ATP-driven molecular motor driving the stepwise translocation of polypeptide chains across the membrane. The chain is Protein translocase subunit SecA from Tolumonas auensis (strain DSM 9187 / NBRC 110442 / TA 4).